The primary structure comprises 724 residues: Acyl-coenzyme A oxidase 2 (724 aa).

A disordered region spans residues 1–23 (MALISNLKDEYDHPTKTDPDTNP). A compositionally biased stretch (basic and acidic residues) spans 7–21 (LKDEYDHPTKTDPDT).

It belongs to the acyl-CoA oxidase family. FAD is required as a cofactor.

The protein resides in the peroxisome. The enzyme catalyses a 2,3-saturated acyl-CoA + O2 = a (2E)-enoyl-CoA + H2O2. It functions in the pathway lipid metabolism; peroxisomal fatty acid beta-oxidation. The polypeptide is Acyl-coenzyme A oxidase 2 (POX2) (Candida maltosa (Yeast)).